The primary structure comprises 662 residues: UvrABC system protein B (662 aa).

One can recognise a Helicase ATP-binding domain in the interval 25–412 (EGIEKGLKMQ…SQKIVEQIIR (388 aa)). 38-45 (GVTGSGKT) serves as a coordination point for ATP. Residues 91–114 (YYDYYQPEAYLPATDTYIEKDSAI) carry the Beta-hairpin motif. One can recognise a Helicase C-terminal domain in the interval 429 to 595 (QVDDLYGEIK…TVQKAVRDVI (167 aa)). Positions 622–657 (KQYVEKLTREMKEAAKALEFEKAAMLRDLIIELRAQ) constitute a UVR domain.

Belongs to the UvrB family. In terms of assembly, forms a heterotetramer with UvrA during the search for lesions. Interacts with UvrC in an incision complex.

It is found in the cytoplasm. Its function is as follows. The UvrABC repair system catalyzes the recognition and processing of DNA lesions. A damage recognition complex composed of 2 UvrA and 2 UvrB subunits scans DNA for abnormalities. Upon binding of the UvrA(2)B(2) complex to a putative damaged site, the DNA wraps around one UvrB monomer. DNA wrap is dependent on ATP binding by UvrB and probably causes local melting of the DNA helix, facilitating insertion of UvrB beta-hairpin between the DNA strands. Then UvrB probes one DNA strand for the presence of a lesion. If a lesion is found the UvrA subunits dissociate and the UvrB-DNA preincision complex is formed. This complex is subsequently bound by UvrC and the second UvrB is released. If no lesion is found, the DNA wraps around the other UvrB subunit that will check the other stand for damage. In Carboxydothermus hydrogenoformans (strain ATCC BAA-161 / DSM 6008 / Z-2901), this protein is UvrABC system protein B.